Here is a 133-residue protein sequence, read N- to C-terminus: UPF0134 protein MPN_151 (133 aa).

It belongs to the UPF0134 family.

The sequence is that of UPF0134 protein MPN_151 from Mycoplasma pneumoniae (strain ATCC 29342 / M129 / Subtype 1) (Mycoplasmoides pneumoniae).